The sequence spans 556 residues: 2-succinyl-5-enolpyruvyl-6-hydroxy-3-cyclohexene-1-carboxylate synthase (556 aa).

It belongs to the TPP enzyme family. MenD subfamily. Homodimer. Requires Mg(2+) as cofactor. The cofactor is Mn(2+). Thiamine diphosphate serves as cofactor.

It catalyses the reaction isochorismate + 2-oxoglutarate + H(+) = 5-enolpyruvoyl-6-hydroxy-2-succinyl-cyclohex-3-ene-1-carboxylate + CO2. Its pathway is quinol/quinone metabolism; 1,4-dihydroxy-2-naphthoate biosynthesis; 1,4-dihydroxy-2-naphthoate from chorismate: step 2/7. It functions in the pathway quinol/quinone metabolism; menaquinone biosynthesis. Functionally, catalyzes the thiamine diphosphate-dependent decarboxylation of 2-oxoglutarate and the subsequent addition of the resulting succinic semialdehyde-thiamine pyrophosphate anion to isochorismate to yield 2-succinyl-5-enolpyruvyl-6-hydroxy-3-cyclohexene-1-carboxylate (SEPHCHC). This is 2-succinyl-5-enolpyruvyl-6-hydroxy-3-cyclohexene-1-carboxylate synthase from Escherichia coli O17:K52:H18 (strain UMN026 / ExPEC).